Consider the following 804-residue polypeptide: Probable exo-1,4-beta-xylosidase xlnD (804 aa).

Residues 1-26 (MAHSMSRPVAATAAALLALALPQALA) form the signal peptide. 5 N-linked (GlcNAc...) asparagine glycosylation sites follow: asparagine 29, asparagine 124, asparagine 148, asparagine 242, and asparagine 251. The active site involves aspartate 315. N-linked (GlcNAc...) asparagine glycans are attached at residues asparagine 357, asparagine 390, asparagine 413, asparagine 444, asparagine 455, asparagine 573, asparagine 576, asparagine 665, asparagine 696, and asparagine 718.

Belongs to the glycosyl hydrolase 3 family.

It localises to the secreted. The enzyme catalyses Hydrolysis of (1-&gt;4)-beta-D-xylans, to remove successive D-xylose residues from the non-reducing termini.. Its pathway is glycan degradation; xylan degradation. Its function is as follows. Xylan 1,4-beta-xylosidase involved in the hydrolysis of xylan, a major structural heterogeneous polysaccharide found in plant biomass representing the second most abundant polysaccharide in the biosphere, after cellulose. This chain is Probable exo-1,4-beta-xylosidase xlnD (xlnD), found in Aspergillus niger (strain ATCC MYA-4892 / CBS 513.88 / FGSC A1513).